Here is a 551-residue protein sequence, read N- to C-terminus: Tetrachloroethene reductive dehalogenase (551 aa).

Positions 1 to 39 (MGEINRRNFLKASMLGAAAAAVASASVVKGVVSPLVADA) form a signal peptide, tat-type signal. The 4Fe-4S ferredoxin-type 1 domain occupies 411-440 (PRKFGVREFCRLCKKCADACPAQAISHEKD). [4Fe-4S] cluster is bound by residues C420, C423, C426, C430, C467, C478, C481, and C485. One can recognise a 4Fe-4S ferredoxin-type 2 domain in the interval 478–496 (CSNCVAVCSWNKVETWNHD).

Belongs to the PceA family. The cofactor is [4Fe-4S] cluster. Corrinoid serves as cofactor. Predicted to be exported by the Tat system. The position of the signal peptide cleavage has been experimentally proven.

It localises to the cell membrane. It catalyses the reaction trichloroethene + chloride + A + H(+) = tetrachloroethene + AH2. The catalysed reaction is trichloroethene + AH2 = (Z)-1,2-dichloroethene + chloride + A + H(+). Catalyzes the reductive dechlorination of tetrachloroethene (PCE) to trichloroethene (TCE) and of trichloroethene to cis-1,2-dichloroethene (DCE). Reduced methyl viologen can act as the artificial electron donor. The protein is Tetrachloroethene reductive dehalogenase of Desulfitobacterium hafniense (Desulfitobacterium frappieri).